Here is a 234-residue protein sequence, read N- to C-terminus: Octanoyltransferase (234 aa).

One can recognise a BPL/LPL catalytic domain in the interval 43–231; that stretch reads IPTRNYFLFV…HFQELFQAEL (189 aa). Substrate is bound by residues 88-95, 160-162, and 173-175; these read RGGDITYH, AMG, and GFA. Residue C191 is the Acyl-thioester intermediate of the active site.

It belongs to the LipB family.

It is found in the cytoplasm. The catalysed reaction is octanoyl-[ACP] + L-lysyl-[protein] = N(6)-octanoyl-L-lysyl-[protein] + holo-[ACP] + H(+). The protein operates within protein modification; protein lipoylation via endogenous pathway; protein N(6)-(lipoyl)lysine from octanoyl-[acyl-carrier-protein]: step 1/2. In terms of biological role, catalyzes the transfer of endogenously produced octanoic acid from octanoyl-acyl-carrier-protein onto the lipoyl domains of lipoate-dependent enzymes. Lipoyl-ACP can also act as a substrate although octanoyl-ACP is likely to be the physiological substrate. The protein is Octanoyltransferase of Christiangramia forsetii (strain DSM 17595 / CGMCC 1.15422 / KT0803) (Gramella forsetii).